We begin with the raw amino-acid sequence, 350 residues long: ADP-ribose pyrophosphatase, mitochondrial (350 aa).

The transit peptide at 1-46 (MAGRSLGKAVATVSLSVALASVTVRSSGCRAIPAPRNPFPSCGFHL) directs the protein to the mitochondrion. Disordered regions lie at residues 53–77 (GSNGVKDNSHNKARTSPYPGSKVER) and 116–153 (SESSFSPRFNEKDGHVERKSQNGLYEIENGRPRNPAGR). S121 carries the post-translational modification Phosphoserine. The segment covering 124–135 (FNEKDGHVERKS) has biased composition (basic and acidic residues). One can recognise a Nudix hydrolase domain in the interval 178-334 (WKRDESGNKI…SQFIKLVAEK (157 aa)). Residues 215-237 (GMVDPGEKISATLKREFGEEALN) carry the Nudix box motif.

Belongs to the Nudix hydrolase family. NudF subfamily. As to quaternary structure, monomer. Interacts with GLOD4. Mg(2+) serves as cofactor. Requires Mn(2+) as cofactor.

It localises to the mitochondrion. The enzyme catalyses ADP-D-ribose + H2O = D-ribose 5-phosphate + AMP + 2 H(+). In terms of biological role, hydrolyzes ADP-ribose (ADPR) to AMP and ribose 5'-phosphate. The sequence is that of ADP-ribose pyrophosphatase, mitochondrial (Nudt9) from Rattus norvegicus (Rat).